Consider the following 275-residue polypeptide: Diaminopimelate epimerase (275 aa).

Asn20 and Asn63 together coordinate substrate. Cys72 (proton donor) is an active-site residue. Substrate-binding positions include 73 to 74 (GN), Asn179, and 197 to 198 (ER). The active-site Proton acceptor is the Cys207. Residue 208–209 (GT) coordinates substrate.

This sequence belongs to the diaminopimelate epimerase family. In terms of assembly, homodimer.

The protein resides in the cytoplasm. It carries out the reaction (2S,6S)-2,6-diaminopimelate = meso-2,6-diaminopimelate. It participates in amino-acid biosynthesis; L-lysine biosynthesis via DAP pathway; DL-2,6-diaminopimelate from LL-2,6-diaminopimelate: step 1/1. In terms of biological role, catalyzes the stereoinversion of LL-2,6-diaminopimelate (L,L-DAP) to meso-diaminopimelate (meso-DAP), a precursor of L-lysine and an essential component of the bacterial peptidoglycan. The sequence is that of Diaminopimelate epimerase from Chlamydia trachomatis serovar L2 (strain ATCC VR-902B / DSM 19102 / 434/Bu).